The primary structure comprises 92 residues: Small ribosomal subunit protein uS19c (92 aa).

It belongs to the universal ribosomal protein uS19 family.

The protein localises to the plastid. Protein S19 forms a complex with S13 that binds strongly to the 16S ribosomal RNA. The polypeptide is Small ribosomal subunit protein uS19c (Aneura mirabilis (Parasitic liverwort)).